A 431-amino-acid chain; its full sequence is Keratin, type I cytoskeletal 40 (431 aa).

The interval 1 to 89 (MASDCSPTGC…CEDGVFNSNE (89 aa)) is head. The region spanning 89–400 (EKETMQFLND…GLLDSEDSRL (312 aa)) is the IF rod domain. A coil 1A region spans residues 90 to 124 (KETMQFLNDRLASYLEKVRGLEELNAELECRIREQ). The segment at 125–135 (CEEDVPLVCPD) is linker 1. Positions 136–236 (YQCYFDTIED…HEEEVNVLRG (101 aa)) are coil 1B. The segment at 237–252 (QLGDRLSVELDTAPTT) is linker 12. The segment at 253 to 396 (DLNRVLDEMR…NTYQGLLDSE (144 aa)) is coil 2. A tail region spans residues 397-431 (DSRLPCNPCSATSMSNDTCEPCSAYVICTVENSCP).

This sequence belongs to the intermediate filament family. As to quaternary structure, heterotetramer of two type I and two type II keratins.

In terms of biological role, may play a role in late hair differentiation. The polypeptide is Keratin, type I cytoskeletal 40 (KRT40) (Bos taurus (Bovine)).